Here is a 426-residue protein sequence, read N- to C-terminus: Enolase (426 aa).

Glutamine 162 provides a ligand contact to (2R)-2-phosphoglycerate. The active-site Proton donor is the glutamate 204. Aspartate 241, glutamate 284, and aspartate 311 together coordinate Mg(2+). (2R)-2-phosphoglycerate is bound by residues lysine 336, arginine 365, serine 366, and lysine 387. Lysine 336 (proton acceptor) is an active-site residue.

This sequence belongs to the enolase family. Mg(2+) is required as a cofactor.

The protein localises to the cytoplasm. The protein resides in the secreted. Its subcellular location is the cell surface. It catalyses the reaction (2R)-2-phosphoglycerate = phosphoenolpyruvate + H2O. Its pathway is carbohydrate degradation; glycolysis; pyruvate from D-glyceraldehyde 3-phosphate: step 4/5. Its function is as follows. Catalyzes the reversible conversion of 2-phosphoglycerate (2-PG) into phosphoenolpyruvate (PEP). It is essential for the degradation of carbohydrates via glycolysis. The protein is Enolase of Acidithiobacillus ferrooxidans (strain ATCC 23270 / DSM 14882 / CIP 104768 / NCIMB 8455) (Ferrobacillus ferrooxidans (strain ATCC 23270)).